The following is a 436-amino-acid chain: MSKYLLMSFTEGSMSTWHYLAMLTTIWLVYQYLKPVPIVPGLPVINRAERWDFFSIKMKRRFLNNAAALMKEGFEQPKLVLSPDYADELKNDARFSLEDAGLRRHYRMKPASLFKIIGQTTPISGRAFLGPEVCGDIRWIEATMGYLEMGVRTAFLLQVFPRFLFPLQRWFPLCRKVRKHIDMAGTILRPVIDSRRADGRPAQDAISWFDEAAAGETYNPVYSQLSLSFASTHTTADTMTKVIIHLAENPAVVTDLRKEVVEAIAKHGELTKTALSQMNLLDSTLKESQRLEPLASATMNRVTREEVTLSNGLWIPRNMYVLVSGHRMRDPTLYPDPEKFDAYRFVKMREIEKKKSDCAYTAATVDHMGFGYGKHSCPGRFFAAHEVKIILCHLILKYEFKLPEDQARTYLLAGFFTSAGPENELLVRRRVEEIAL.

Residue cysteine 377 coordinates heme.

The protein belongs to the cytochrome P450 family. The cofactor is heme.

Its pathway is alkaloid biosynthesis. In terms of biological role, cytochrome P450 monooxygenase; part of the gene cluster that mediates the biosynthesis of paraherquamide, a fungal indole alkaloid that belongs to a family of natural products containing a characteristic bicyclo[2.2.2]diazaoctane core. The first steps in the biosynthesis of paraherquamide is the production of the beta-methyl-proline precursor from L-isoleucine. They require oxidation of a terminally hydroxylated L-isoleucine to the corresponding aldehyde by enzymes which have still to be identified. Spontaneous cyclization and dehydration would yield the 4-methyl pyrolline-5-carboxylic acid, which is then reduced by the pyrroline-5-carboxylate reductase phqD leading to the beta-methyl-proline precursor. The next step of paraherquamide biosynthesis involves coupling of beta-methyl-proline and L-tryptophan by the bimodular NRPS phqB, to produce a monooxopiperazine intermediate. The reductase (R) domain of phqB utilizes NADPH for hydride transfer to reduce the thioester bond of the T domain-tethered linear dipeptide to a hemithioaminal intermediate, which spontaneously cleaves the C-S bond to release the aldehyde product. This compound undergoes spontaneous cyclization and dehydration to give a dienamine which is reverse prenylated at C-2 by the reverse prenyltransferase phqJ. The other prenyltransferase present in the cluster, phqI may be a redundant gene in the pathway. During biosynthetic assembly, the key step to produce the polycyclic core is catalyzed by the bifunctional reductase and intramolecular [4+2] Diels-Alderase, phqE, resulting in formation of the [2.2.2] diazaoctane intermediate preparaherquamide. Following formation of preparaherquamide, an indole 2,3-epoxidation-initiated pinacol-like rearrangement is catalyzed by the phqK FAD-dependent monooxygenase. The prenyltransferase phqA, the cytochrome P450 monooxygenase phqL, and the FAD-linked oxidoreductase phqH (or the cytochrome P450 monooxygenase phqM), are proposed to be involved in the formation of the pyran ring. The FAD-dependent monooxygenase phqK is likely responsible for generation of the spiro-oxindole, and the N-methylation is likely mediated by the phqN methyltransferase leading to the isolable natural product paraherquamide F. However, the order of these biosynthetic steps has still to be determined. In late-stage paraherquamide biosynthesis, the third P450 monooxygenase, phqO, is probably responsible for the C-14 hydroxylation, transforming paraherquamide F to paraherquamide G, and paraherquamide E to the final product paraherquamide A. The expansion from the 6-membered ring pyran (in paraherquamides F and G) to the 7-membered dioxepin ring (in paraherquamides A and E) represents a poorly understood but intriguing process that probably involves the 2-oxoglutarate-dependent dioxygenase phqC. Finally, the remaining members of the paraherquamide cluster, including phqI as well as phqM (or phqH), do not have a clearly prescribed role and appear to be redundant. In Penicillium fellutanum, this protein is Cytochrome P450 monooxygenase phqO.